A 650-amino-acid polypeptide reads, in one-letter code: Alpha-agglutinin (650 aa).

A signal peptide spans 1–19; sequence MFTFLKIILWLFSLALASA. 4 N-linked (GlcNAc...) asparagine glycosylation sites follow: N79, N109, N135, and N248. The cysteines at positions 97 and 114 are disulfide-linked. Cysteines 202 and 300 form a disulfide. The ig-like fold domain important for alpha-agglutinin activity, contributing to a functional binding site for a-agglutinin stretch occupies residues 216 to 322; it reads YDSSNNNVDL…FSTTREFIVY (107 aa). An O-linked (Man...) serine glycan is attached at S282. Residues T289, T299, and T303 are each glycosylated (O-linked (Man...) threonine). N-linked (GlcNAc...) asparagine glycosylation is present at N306. Residues T307, T308, and T311 are each glycosylated (O-linked (Man...) threonine). O-linked (Man...) serine glycosylation occurs at S314. O-linked (Man...) threonine glycans are attached at residues T315, T316, and T329. Residues S331, S334, S335, and S338 are each glycosylated (O-linked (Man...) serine). O-linked (Man...) threonine glycosylation is found at T339, T340, T341, T342, and T345. A run of 2 repeats spans residues 339–378 and 384–423. Positions 339-423 are 2 X 40 AA tandem repeats; the sequence is TTTTDLTSIN…EVISDVETIS (85 aa). A glycan (O-linked (Man...) serine) is linked at S346. O-linked (Man...) threonine glycosylation occurs at T349. A glycan (O-linked (Man...) serine) is linked at S350. N-linked (GlcNAc...) asparagine glycosylation is found at N364, N402, N485, N501, and N614. G627 carries GPI-anchor amidated glycine lipidation. A propeptide spans 628 to 650 (removed in mature form); the sequence is KASIFFSAELGSIIFLLLSYLLF.

To C.albicans ALS1. Interacts with AGA2. N-glycosylated, and O-glycosylated by both PMT1 and PMT2. In terms of processing, the GPI-anchor is attached to the protein in the endoplasmic reticulum and serves to target the protein to the cell surface. There, the glucosamine-inositol phospholipid moiety is cleaved off and the GPI-modified mannoprotein is covalently attached via its lipidless GPI glycan remnant to the 1,6-beta-glucan of the outer cell wall layer.

It is found in the secreted. The protein resides in the cell wall. Its subcellular location is the membrane. Its function is as follows. Cell surface glycoprotein promoting cell-cell contact to facilitate mating. S.cerevisiae A and alpha cells express the complementary cell surface glycoproteins A-agglutinin and alpha-, respectively, which interact with one another to promote cellular aggregation during mating. In Saccharomyces cerevisiae (strain ATCC 204508 / S288c) (Baker's yeast), this protein is Alpha-agglutinin (SAG1).